The primary structure comprises 388 residues: Basigin (388 aa).

A signal peptide spans 1-22 (MAAALLLALAFTFLSGQGACAA). Topologically, residues 23 to 326 (AGFLKAPMSQ…ISLRVRSRLA (304 aa)) are extracellular. One can recognise an Ig-like domain in the interval 37–120 (GGSVVLHCEA…SSDPDRNHLT (84 aa)). Cystine bridges form between Cys44–Cys108, Cys157–Cys203, and Cys242–Cys304. Positions 138–219 (EPGTIVTSVQ…VGRGNINVEG (82 aa)) constitute an Ig-like C2-type domain. N-linked (GlcNAc...) asparagine glycans are attached at residues Asn160, Asn269, and Asn305. The 100-residue stretch at 221–320 (PRIKVGKKSE…GSARETISLR (100 aa)) folds into the Ig-like V-type domain. A helical membrane pass occupies residues 327–347 (ALWPFLGIVAEVLVLVTIIFI). Topologically, residues 348–388 (YEKRRKPDQTLDEDDPGAAPLKGSGSHLNDKDKNVRQRNAT) are cytoplasmic. Positions 355-388 (DQTLDEDDPGAAPLKGSGSHLNDKDKNVRQRNAT) are disordered. The residue at position 357 (Thr357) is a Phosphothreonine. Ser371 bears the Phosphoserine mark.

In terms of assembly, homooligomer. Interacts with NXNL1, SLC2A1 and SLC16A1/GLUT1. Interacts with XKR8; promoting its localization at the cell membrane. Homooligomer. Interacts with SLC16A1; interaction mediates SLC16A1 targeting to the plasma membrane. Interacts with SLC16A3; interaction mediates SLC16A3 targeting to the plasma membrane. Interacts with VEGFA, KDR/VEGFR2, PPIA/CYPA, SLC16A12, SLC16A11, ATP1B2, MAG, L1CAM and AJAP1. Interacts with PPIL2; regulates BSG transport to the cell membrane. As to quaternary structure, interacts with SLC16A6; this interaction mediates targeting to the plasma membrane. As to expression, expressed in the skeletal muscle, liver, small intestine, kidney, testis, brain, heart and spleen. Also present in various immature cells and endothelia.

The protein resides in the cell membrane. Its subcellular location is the photoreceptor inner segment. It is found in the cell projection. It localises to the cilium. The protein localises to the photoreceptor outer segment. The protein resides in the endoplasmic reticulum membrane. Its subcellular location is the basolateral cell membrane. In terms of biological role, essential for normal retinal maturation and development. Acts as a retinal cell surface receptor for NXNL1 and plays an important role in NXNL1-mediated survival of retinal cone photoreceptors. In association with glucose transporter SLC16A1/GLUT1 and NXNL1, promotes retinal cone survival by enhancing aerobic glycolysis and accelerating the entry of glucose into photoreceptors. Functionally, signaling receptor for cyclophilins, essential for PPIA/CYPA and PPIB/CYPB-dependent signaling related to chemotaxis and adhesion of immune cells. Plays an important role in targeting the monocarboxylate transporters SLC16A1/GLUT1 and SLC16A3 to the plasma membrane. Acts as a coreceptor for vascular endothelial growth factor receptor 2 (KDR/VEGFR2) in endothelial cells enhancing its VEGFA-mediated activation and downstream signaling. Promotes angiogenesis through EPAS1/HIF2A-mediated up-regulation of VEGFA and KDR/VEGFR2 in endothelial cells. Plays an important role in spermatogenesis; mediates interactions between germ cells and Sertoli cell and is essential for the development/differentiation of germ cells to round spermatids. The chain is Basigin (Bsg) from Rattus norvegicus (Rat).